A 357-amino-acid chain; its full sequence is Phosphoribosylformylglycinamidine cyclo-ligase (357 aa).

It belongs to the AIR synthase family.

Its subcellular location is the cytoplasm. It carries out the reaction 2-formamido-N(1)-(5-O-phospho-beta-D-ribosyl)acetamidine + ATP = 5-amino-1-(5-phospho-beta-D-ribosyl)imidazole + ADP + phosphate + H(+). It functions in the pathway purine metabolism; IMP biosynthesis via de novo pathway; 5-amino-1-(5-phospho-D-ribosyl)imidazole from N(2)-formyl-N(1)-(5-phospho-D-ribosyl)glycinamide: step 2/2. This Rhizobium rhizogenes (strain K84 / ATCC BAA-868) (Agrobacterium radiobacter) protein is Phosphoribosylformylglycinamidine cyclo-ligase.